The sequence spans 617 residues: Bifunctional TH2 protein, mitochondrial (617 aa).

The N-terminal 28 residues, 1–28, are a transit peptide targeting the mitochondrion; the sequence is MRFLFPTRLINNSSLGLLRSPHTTAPIR. Aspartate 107 is a binding site for substrate. Cysteine 213 functions as the Nucleophile in the catalytic mechanism. Substrate-binding residues include tyrosine 217 and tyrosine 244. The active-site Proton donor is glutamate 286.

It in the N-terminal section; belongs to the TenA family. In the C-terminal section; belongs to the HAD-like hydrolase superfamily.

It localises to the mitochondrion. The protein localises to the cytoplasm. The enzyme catalyses thiamine phosphate + H2O = thiamine + phosphate. The catalysed reaction is 4-amino-5-aminomethyl-2-methylpyrimidine + H2O = 4-amino-5-hydroxymethyl-2-methylpyrimidine + NH4(+). May be involved in the salvage of thiamine breakdown products. This protein has a haloacid dehalogenase family domain fused to its TenA domain. Phosphatase with the highest activity against thiamine monophosphate (ThMP) and, with a lower activity, against thiamine diphosphate (ThDP), flavin mononucleotide, inorganic pyrophosphate, CTP and dATP. Has a thiamine salvage hydrolase activity, but only against 4-amino-5-aminomethyl-2-methylpyrimidine (amino-HMP) and not against N-formylamino-HMP, desthiothiamine, thiamine, ThMP, and ThDP. In Arabidopsis thaliana (Mouse-ear cress), this protein is Bifunctional TH2 protein, mitochondrial.